The following is a 149-amino-acid chain: Chromophore lyase CpcS/CpeS homolog (149 aa).

The protein belongs to the CpcS/CpeS biliprotein lyase family.

It localises to the plastid. Its subcellular location is the chloroplast. Might function to covalently attach a chromophore to Cys residue(s) of phycobiliproteins. The chain is Chromophore lyase CpcS/CpeS homolog from Pyropia yezoensis (Susabi-nori).